The chain runs to 610 residues: Dihydroxy-acid dehydratase (610 aa).

D81 provides a ligand contact to Mg(2+). C122 is a binding site for [2Fe-2S] cluster. Positions 123 and 124 each coordinate Mg(2+). N6-carboxylysine is present on K124. C193 contributes to the [2Fe-2S] cluster binding site. E489 contributes to the Mg(2+) binding site. S515 serves as the catalytic Proton acceptor.

It belongs to the IlvD/Edd family. In terms of assembly, homodimer. [2Fe-2S] cluster is required as a cofactor. It depends on Mg(2+) as a cofactor.

It carries out the reaction (2R)-2,3-dihydroxy-3-methylbutanoate = 3-methyl-2-oxobutanoate + H2O. It catalyses the reaction (2R,3R)-2,3-dihydroxy-3-methylpentanoate = (S)-3-methyl-2-oxopentanoate + H2O. Its pathway is amino-acid biosynthesis; L-isoleucine biosynthesis; L-isoleucine from 2-oxobutanoate: step 3/4. The protein operates within amino-acid biosynthesis; L-valine biosynthesis; L-valine from pyruvate: step 3/4. Functions in the biosynthesis of branched-chain amino acids. Catalyzes the dehydration of (2R,3R)-2,3-dihydroxy-3-methylpentanoate (2,3-dihydroxy-3-methylvalerate) into 2-oxo-3-methylpentanoate (2-oxo-3-methylvalerate) and of (2R)-2,3-dihydroxy-3-methylbutanoate (2,3-dihydroxyisovalerate) into 2-oxo-3-methylbutanoate (2-oxoisovalerate), the penultimate precursor to L-isoleucine and L-valine, respectively. The polypeptide is Dihydroxy-acid dehydratase (Xylella fastidiosa (strain 9a5c)).